A 404-amino-acid chain; its full sequence is uncharacterized protein (404 aa).

The next 11 helical transmembrane spans lie at 9–29 (IYLI…PYLS), 36–56 (GFGE…FIGL), 76–96 (LVVK…LLFC), 103–123 (IMFY…QLSI), 135–155 (FIQV…LEFY), 162–182 (KRIL…YLIY), 199–219 (AFFY…SFFI), 236–256 (LGLY…ILAI), 288–308 (IVPI…LFFL), 319–339 (IIVF…VNYL), and 366–386 (LIFT…LGIL).

It belongs to the polysaccharide synthase family. HI_0867/HI_1700 subfamily.

Its subcellular location is the cell membrane. This is an uncharacterized protein from Haemophilus influenzae (strain ATCC 51907 / DSM 11121 / KW20 / Rd).